The chain runs to 216 residues: Glycerol-3-phosphate acyltransferase (216 aa).

Helical transmembrane passes span Thr-4–Gly-24, Leu-71–Ile-91, Val-113–Leu-133, Val-144–Leu-164, and Pro-165–Arg-185.

The protein belongs to the PlsY family. In terms of assembly, probably interacts with PlsX.

It is found in the cell membrane. The catalysed reaction is an acyl phosphate + sn-glycerol 3-phosphate = a 1-acyl-sn-glycero-3-phosphate + phosphate. It functions in the pathway lipid metabolism; phospholipid metabolism. Its function is as follows. Catalyzes the transfer of an acyl group from acyl-phosphate (acyl-PO(4)) to glycerol-3-phosphate (G3P) to form lysophosphatidic acid (LPA). This enzyme utilizes acyl-phosphate as fatty acyl donor, but not acyl-CoA or acyl-ACP. This is Glycerol-3-phosphate acyltransferase from Streptococcus sanguinis (strain SK36).